A 101-amino-acid chain; its full sequence is Putative pterin-4-alpha-carbinolamine dehydratase (101 aa).

The protein belongs to the pterin-4-alpha-carbinolamine dehydratase family.

The enzyme catalyses (4aS,6R)-4a-hydroxy-L-erythro-5,6,7,8-tetrahydrobiopterin = (6R)-L-erythro-6,7-dihydrobiopterin + H2O. The sequence is that of Putative pterin-4-alpha-carbinolamine dehydratase from Nitrobacter hamburgensis (strain DSM 10229 / NCIMB 13809 / X14).